The chain runs to 517 residues: Crotonobetaine/carnitine--CoA ligase (517 aa).

The protein belongs to the ATP-dependent AMP-binding enzyme family.

It catalyses the reaction 4-(trimethylamino)butanoate + ATP + CoA = 4-(trimethylamino)butanoyl-CoA + AMP + diphosphate. The enzyme catalyses crotonobetaine + ATP + CoA = crotonobetainyl-CoA + AMP + diphosphate. The catalysed reaction is (R)-carnitine + ATP + CoA = (R)-carnitinyl-CoA + AMP + diphosphate. It functions in the pathway amine and polyamine metabolism; carnitine metabolism. In terms of biological role, catalyzes the transfer of CoA to carnitine, generating the initial carnitinyl-CoA needed for the CaiB reaction cycle. Also has activity toward crotonobetaine and gamma-butyrobetaine. The chain is Crotonobetaine/carnitine--CoA ligase from Escherichia coli (strain K12 / MC4100 / BW2952).